Reading from the N-terminus, the 210-residue chain is Calaxin (210 aa).

EF-hand domains follow at residues 64–99 (TDDM…FLRG), 100–135 (TLDE…SLIR), and 145–180 (GIKD…ENLL). The Ca(2+) site is built by D77, D79, D81, Y83, E88, D113, N115, D117, Y119, E124, D158, D160, D162, R164, and D169.

Component of the outer dynein arm-docking complex along with ODAD1, ODAD2, ODAD3 and ODAD4.

Its subcellular location is the cytoplasm. It is found in the cytoskeleton. The protein resides in the cilium axoneme. The protein localises to the cell projection. It localises to the cilium. Its subcellular location is the flagellum. Component of the outer dynein arm-docking complex (ODA-DC) that mediates outer dynein arms (ODA) binding onto the doublet microtubule. Seems to regulate the assembly of both ODAs and their axonemal docking complex onto ciliary microtubules. Regulates ciliary and flagellar motility and is required for cilia-driven determination of body laterality. Its function is as follows. Regulates ciliary motility and is required for cilia-driven determination of body laterality. In Danio rerio (Zebrafish), this protein is Calaxin (clxn).